The primary structure comprises 267 residues: Ribosomal RNA small subunit methyltransferase A (267 aa).

Residues Leu-20, Gly-45, Glu-68, Asp-91, and Asn-113 each coordinate S-adenosyl-L-methionine.

This sequence belongs to the class I-like SAM-binding methyltransferase superfamily. rRNA adenine N(6)-methyltransferase family. RsmA subfamily.

It is found in the cytoplasm. The enzyme catalyses adenosine(1518)/adenosine(1519) in 16S rRNA + 4 S-adenosyl-L-methionine = N(6)-dimethyladenosine(1518)/N(6)-dimethyladenosine(1519) in 16S rRNA + 4 S-adenosyl-L-homocysteine + 4 H(+). Specifically dimethylates two adjacent adenosines (A1518 and A1519) in the loop of a conserved hairpin near the 3'-end of 16S rRNA in the 30S particle. May play a critical role in biogenesis of 30S subunits. This Blochmanniella pennsylvanica (strain BPEN) protein is Ribosomal RNA small subunit methyltransferase A.